The sequence spans 247 residues: 5-oxoprolinase subunit A (247 aa).

It belongs to the LamB/PxpA family. As to quaternary structure, forms a complex composed of PxpA, PxpB and PxpC.

It carries out the reaction 5-oxo-L-proline + ATP + 2 H2O = L-glutamate + ADP + phosphate + H(+). Catalyzes the cleavage of 5-oxoproline to form L-glutamate coupled to the hydrolysis of ATP to ADP and inorganic phosphate. In Klebsiella pneumoniae subsp. pneumoniae (strain ATCC 700721 / MGH 78578), this protein is 5-oxoprolinase subunit A.